Here is a 279-residue protein sequence, read N- to C-terminus: Urease accessory protein UreD (279 aa).

Belongs to the UreD family. UreD, UreF and UreG form a complex that acts as a GTP-hydrolysis-dependent molecular chaperone, activating the urease apoprotein by helping to assemble the nickel containing metallocenter of UreC. The UreE protein probably delivers the nickel.

The protein localises to the cytoplasm. Its function is as follows. Required for maturation of urease via the functional incorporation of the urease nickel metallocenter. This Streptococcus salivarius (strain 57.I) protein is Urease accessory protein UreD.